Consider the following 115-residue polypeptide: Putative type I restriction enzyme MpnIIP endonuclease subunit middle part (115 aa).

In terms of biological role, the middle section of a putative type I restriction enzyme that if reconstituted might recognize 5'-GAN(7)TAY-3' and cleave a random distance away. Subunit R is required for both nuclease and ATPase activities, but not for modification. This is Putative type I restriction enzyme MpnIIP endonuclease subunit middle part from Mycoplasma pneumoniae (strain ATCC 29342 / M129 / Subtype 1) (Mycoplasmoides pneumoniae).